We begin with the raw amino-acid sequence, 323 residues long: Acetyl-coenzyme A carboxylase carboxyl transferase subunit alpha (323 aa).

The 255-residue stretch at 39 to 293 (RLSKKSQQLT…RRALADSLRQ (255 aa)) folds into the CoA carboxyltransferase C-terminal domain.

The protein belongs to the AccA family. In terms of assembly, acetyl-CoA carboxylase is a heterohexamer composed of biotin carboxyl carrier protein (AccB), biotin carboxylase (AccC) and two subunits each of ACCase subunit alpha (AccA) and ACCase subunit beta (AccD).

It localises to the cytoplasm. It catalyses the reaction N(6)-carboxybiotinyl-L-lysyl-[protein] + acetyl-CoA = N(6)-biotinyl-L-lysyl-[protein] + malonyl-CoA. Its pathway is lipid metabolism; malonyl-CoA biosynthesis; malonyl-CoA from acetyl-CoA: step 1/1. Component of the acetyl coenzyme A carboxylase (ACC) complex. First, biotin carboxylase catalyzes the carboxylation of biotin on its carrier protein (BCCP) and then the CO(2) group is transferred by the carboxyltransferase to acetyl-CoA to form malonyl-CoA. The sequence is that of Acetyl-coenzyme A carboxylase carboxyl transferase subunit alpha from Burkholderia lata (strain ATCC 17760 / DSM 23089 / LMG 22485 / NCIMB 9086 / R18194 / 383).